The chain runs to 60 residues: Cytochrome c oxidase subunit 9, mitochondrial (60 aa).

The Mitochondrial matrix portion of the chain corresponds to 1–15 (MSAIAPITGTIRKRI). A helical membrane pass occupies residues 16-38 (LADITIGFAIGGAMASYWWWGFH). At 39–57 (KNIINKREAYYAKLAEQKA) the chain is on the mitochondrial intermembrane side. A propeptide spans 58-60 (AEN) (removed in mature form).

This sequence belongs to the fungal cytochrome c oxidase subunit 7a family. Component of the cytochrome c oxidase (complex IV, CIV), a multisubunit enzyme composed of a catalytic core of 3 subunits and several supernumerary subunits. The complex exists as a monomer or a dimer and forms supercomplexes (SCs) in the inner mitochondrial membrane with ubiquinol-cytochrome c oxidoreductase (cytochrome b-c1 complex, complex III, CIII).

The protein resides in the mitochondrion inner membrane. Its pathway is energy metabolism; oxidative phosphorylation. In terms of biological role, component of the cytochrome c oxidase, the last enzyme in the mitochondrial electron transport chain which drives oxidative phosphorylation. The respiratory chain contains 3 multisubunit complexes succinate dehydrogenase (complex II, CII), ubiquinol-cytochrome c oxidoreductase (cytochrome b-c1 complex, complex III, CIII) and cytochrome c oxidase (complex IV, CIV), that cooperate to transfer electrons derived from NADH and succinate to molecular oxygen, creating an electrochemical gradient over the inner membrane that drives transmembrane transport and the ATP synthase. Cytochrome c oxidase is the component of the respiratory chain that catalyzes the reduction of oxygen to water. Electrons originating from reduced cytochrome c in the intermembrane space (IMS) are transferred via the dinuclear copper A center (CU(A)) of subunit 2 and heme A of subunit 1 to the active site in subunit 1, a binuclear center (BNC) formed by heme A3 and copper B (CU(B)). The BNC reduces molecular oxygen to 2 water molecules using 4 electrons from cytochrome c in the IMS and 4 protons from the mitochondrial matrix. The chain is Cytochrome c oxidase subunit 9, mitochondrial (COX9) from Kluyveromyces lactis (strain ATCC 8585 / CBS 2359 / DSM 70799 / NBRC 1267 / NRRL Y-1140 / WM37) (Yeast).